The primary structure comprises 747 residues: Eukaryotic translation initiation factor 3 subunit B (747 aa).

One can recognise an RRM domain in the interval 42-128 (AFVVVDGLPE…HTLRVNKLTD (87 aa)). 5 WD repeats span residues 195–234 (DRQH…RQRR), 236–292 (AHPF…PLRS), 310–349 (APKF…LLDK), 520–563 (LEKK…EKPE), and 578–623 (ADHY…LREE).

Belongs to the eIF-3 subunit B family. In terms of assembly, component of the eukaryotic translation initiation factor 3 (eIF-3) complex.

Its subcellular location is the cytoplasm. In terms of biological role, RNA-binding component of the eukaryotic translation initiation factor 3 (eIF-3) complex, which is involved in protein synthesis of a specialized repertoire of mRNAs and, together with other initiation factors, stimulates binding of mRNA and methionyl-tRNAi to the 40S ribosome. The eIF-3 complex specifically targets and initiates translation of a subset of mRNAs involved in cell proliferation. The chain is Eukaryotic translation initiation factor 3 subunit B (prt-1) from Neurospora crassa (strain ATCC 24698 / 74-OR23-1A / CBS 708.71 / DSM 1257 / FGSC 987).